The primary structure comprises 184 residues: Large ribosomal subunit protein uL5 (184 aa).

The protein belongs to the universal ribosomal protein uL5 family. As to quaternary structure, part of the 50S ribosomal subunit; part of the 5S rRNA/L5/L18/L25 subcomplex. Contacts the 5S rRNA and the P site tRNA. Forms a bridge to the 30S subunit in the 70S ribosome.

Functionally, this is one of the proteins that bind and probably mediate the attachment of the 5S RNA into the large ribosomal subunit, where it forms part of the central protuberance. In the 70S ribosome it contacts protein S13 of the 30S subunit (bridge B1b), connecting the 2 subunits; this bridge is implicated in subunit movement. Contacts the P site tRNA; the 5S rRNA and some of its associated proteins might help stabilize positioning of ribosome-bound tRNAs. The sequence is that of Large ribosomal subunit protein uL5 from Pelagibacter ubique (strain HTCC1062).